The following is a 423-amino-acid chain: Maltooligosaccharide ABC transporter solute-binding lipoprotein (423 aa).

A signal peptide spans 1-24; the sequence is MSSKFMKSAAVLGTATLASLLLVA. The N-palmitoyl cysteine moiety is linked to residue Cys25. Residue Cys25 is the site of S-diacylglycerol cysteine attachment. Substrate contacts are provided by residues Tyr52, Asp77, Asp83, 103–104, Glu148, Asp193, Asn196, 251–254, Trp274, and Lys307; these read DR and EGAG.

This sequence belongs to the bacterial solute-binding protein 1 family.

The protein resides in the cell membrane. Part of an ABC transporter complex involved in the uptake of maltodextrins. Binds glycogen-derived linear maltooligosaccharides increasing in size from maltotriose to maltooctaose with the highest affinity for maltotriose. Has a very weak affinity for maltose. Has also a very low affinity for maltotetraitol, indicating that the binding is selective for maltooligosaccharides with an intact reducing end. This chain is Maltooligosaccharide ABC transporter solute-binding lipoprotein, found in Streptococcus pneumoniae serotype 4 (strain ATCC BAA-334 / TIGR4).